The chain runs to 251 residues: Ribonuclease HII (251 aa).

Residues 32-223 (GPVAGVDEAG…VRERLGLRPL (192 aa)) enclose the RNase H type-2 domain. 3 residues coordinate a divalent metal cation: Asp-38, Glu-39, and Asp-132.

It belongs to the RNase HII family. Mn(2+) serves as cofactor. It depends on Mg(2+) as a cofactor.

Its subcellular location is the cytoplasm. The catalysed reaction is Endonucleolytic cleavage to 5'-phosphomonoester.. Functionally, endonuclease that specifically degrades the RNA of RNA-DNA hybrids. In Nocardia farcinica (strain IFM 10152), this protein is Ribonuclease HII.